The following is a 499-amino-acid chain: Probable cytochrome P450 cyp-35D1 (499 aa).

Cys-444 serves as a coordination point for heme.

This sequence belongs to the cytochrome P450 family. It depends on heme as a cofactor. In terms of tissue distribution, expressed in hypodermis, intestine and vulva upon thiabendazole (TBZ) exposure.

In terms of biological role, cytochromes P450 are a group of heme-thiolate monooxygenases. They oxidize a variety of structurally unrelated compounds, including steroids, fatty acids, and xenobiotics. Involved in the oxidative metabolism of thiabendazole (TBZ). Catalyzes the conversion of TBZ to its hydroxylated form. The chain is Probable cytochrome P450 cyp-35D1 from Caenorhabditis elegans.